Here is a 203-residue protein sequence, read N- to C-terminus: Recombination protein RecR (203 aa).

Residues 57–72 (CQRCRTLAETPLCSIC) form a C4-type zinc finger. One can recognise a Toprim domain in the interval 80 to 175 (GLLCVVESPA…RLSRLAYGVP (96 aa)).

Belongs to the RecR family.

May play a role in DNA repair. It seems to be involved in an RecBC-independent recombinational process of DNA repair. It may act with RecF and RecO. In Chromohalobacter salexigens (strain ATCC BAA-138 / DSM 3043 / CIP 106854 / NCIMB 13768 / 1H11), this protein is Recombination protein RecR.